A 283-amino-acid polypeptide reads, in one-letter code: Protein FAM78A (283 aa).

The protein belongs to the FAM78 family.

The protein is Protein FAM78A (FAM78A) of Homo sapiens (Human).